A 784-amino-acid polypeptide reads, in one-letter code: Probable aminopeptidase 1 (784 aa).

Substrate is bound by residues glutamate 103 and 236–240; that span reads GAMEN. Histidine 271 contributes to the Zn(2+) binding site. Glutamate 272 functions as the Proton acceptor in the catalytic mechanism. Zn(2+) is bound by residues histidine 275 and glutamate 294.

Belongs to the peptidase M1 family. Requires Zn(2+) as cofactor.

Its subcellular location is the cytoplasm. The sequence is that of Probable aminopeptidase 1 (ape1) from Saccharolobus solfataricus (strain ATCC 35092 / DSM 1617 / JCM 11322 / P2) (Sulfolobus solfataricus).